A 408-amino-acid chain; its full sequence is Succinylornithine transaminase (408 aa).

N6-(pyridoxal phosphate)lysine is present on K252.

It belongs to the class-III pyridoxal-phosphate-dependent aminotransferase family. AstC subfamily. Requires pyridoxal 5'-phosphate as cofactor.

The catalysed reaction is N(2)-succinyl-L-ornithine + 2-oxoglutarate = N-succinyl-L-glutamate 5-semialdehyde + L-glutamate. It participates in amino-acid degradation; L-arginine degradation via AST pathway; L-glutamate and succinate from L-arginine: step 3/5. Functionally, catalyzes the transamination of N(2)-succinylornithine and alpha-ketoglutarate into N(2)-succinylglutamate semialdehyde and glutamate. Can also act as an acetylornithine aminotransferase. This is Succinylornithine transaminase from Salmonella typhi.